The chain runs to 350 residues: MNVPDRKKALEAAIAYIEKQFGSGSIMSLGKHSATHEISTIKTGALSLDLALGIGGVPKGRIVEIFGPESSGKTTLATHIVANAQKMGGVAAYIDAEHALDPGYASLIGANINDLMISQPDCGEDALSIAELLARSGAVDVIVIDSVAALVPKSELEGDIGDVHVGLQARMMSQALRKLTATLARSQTCAIFINQIREKIGVSFGNPETTTGGRALKFYSSIRIDIRRIGAIKGNESFDLGNRIKVKVAKNKLAPPFRTAEFDILFNEGISSAGCILDLAVEHNIVEKKGSWFNYQDRKLGQGREAVREELKKNKKLFDELEKRILDVTSVPKATVVEEKKEEQSIQPVV.

An ATP-binding site is contributed by 67–74 (GPESSGKT).

The protein belongs to the RecA family.

It localises to the cytoplasm. Functionally, can catalyze the hydrolysis of ATP in the presence of single-stranded DNA, the ATP-dependent uptake of single-stranded DNA by duplex DNA, and the ATP-dependent hybridization of homologous single-stranded DNAs. It interacts with LexA causing its activation and leading to its autocatalytic cleavage. This chain is Protein RecA, found in Chlamydia felis (strain Fe/C-56) (Chlamydophila felis).